The following is a 202-amino-acid chain: ATP-dependent Clp protease proteolytic subunit (202 aa).

Serine 106 functions as the Nucleophile in the catalytic mechanism. Histidine 131 is an active-site residue.

Belongs to the peptidase S14 family. In terms of assembly, fourteen ClpP subunits assemble into 2 heptameric rings which stack back to back to give a disk-like structure with a central cavity, resembling the structure of eukaryotic proteasomes.

Its subcellular location is the cytoplasm. It carries out the reaction Hydrolysis of proteins to small peptides in the presence of ATP and magnesium. alpha-casein is the usual test substrate. In the absence of ATP, only oligopeptides shorter than five residues are hydrolyzed (such as succinyl-Leu-Tyr-|-NHMec, and Leu-Tyr-Leu-|-Tyr-Trp, in which cleavage of the -Tyr-|-Leu- and -Tyr-|-Trp bonds also occurs).. In terms of biological role, cleaves peptides in various proteins in a process that requires ATP hydrolysis. Has a chymotrypsin-like activity. Plays a major role in the degradation of misfolded proteins. This Acidovorax ebreus (strain TPSY) (Diaphorobacter sp. (strain TPSY)) protein is ATP-dependent Clp protease proteolytic subunit.